The primary structure comprises 498 residues: E3 ubiquitin-protein ligase TRIM22 (498 aa).

An RING-type zinc finger spans residues 15–60 (CPICLELLTEPLSLDCGHSFCQACITAKIKESVIISRGESSCPVCQ). The B box-type zinc-finger motif lies at 92-133 (QKRDVCEHHGKKLQIFCKEDGKVICWVCELSQEHQGHQTFRI). Zn(2+) is bound by residues Cys97, His100, Cys119, and His125. Positions 132 to 248 (RINEVVKECQ…RRLRGSSVEM (117 aa)) form a coiled coil. The Nuclear localization signal signature appears at 257–275 (KRSESWTLKKPKSVSKKLK). The 216-residue stretch at 283-498 (LSGMLQVLKE…VPMTVCPPSS (216 aa)) folds into the B30.2/SPRY domain.

The protein belongs to the TRIM/RBCC family. Homotrimer. In terms of assembly, (Microbial infection) Interacts with HIV-1 Gag polyprotein; this interaction seems to reduce gag production or virus budding. As to quaternary structure, (Microbial infection) Interacts with EMCV protease 3C; this interaction leads to viral protease ubiquitination. In terms of processing, auto-ubiquitinated. In terms of tissue distribution, strongly expressed in peripheral blood leukocytes, spleen, thymus, and ovary. Expressed at basal levels in other tissues.

It localises to the cytoplasm. Its subcellular location is the nucleus. The protein localises to the nucleus speckle. The protein resides in the cajal body. The enzyme catalyses S-ubiquitinyl-[E2 ubiquitin-conjugating enzyme]-L-cysteine + [acceptor protein]-L-lysine = [E2 ubiquitin-conjugating enzyme]-L-cysteine + N(6)-ubiquitinyl-[acceptor protein]-L-lysine.. The protein operates within protein modification; protein ubiquitination. In terms of biological role, interferon-induced E3 ubiquitin ligase that plays important roles in innate and adaptive immunity. Restricts the replication of many viruses including HIV-1, encephalomyocarditis virus (EMCV), hepatitis B virus (HBV), hepatitis C virus (HCV) or Zika virus (ZIKV). Mechanistically, negatively regulates HCV replication by promoting ubiquitination and subsequent degradation of viral NS5A. Also acts by promoting the degradation of Zika virus NS1 and NS3 proteins through proteasomal degradation. Acts as a suppressor of basal HIV-1 LTR-driven transcription by preventing Sp1 binding to the HIV-1 promoter. Also plays a role in antiviral immunity by co-regulating together with NT5C2 the RIGI/NF-kappa-B pathway by promoting 'Lys-63'-linked ubiquitination of RIGI, while NT5C2 is responsible for 'Lys-48'-linked ubiquitination of RIGI. Participates in adaptive immunity by suppressing the amount of MHC class II protein in a negative feedback manner in order to limit the extent of MHC class II induction. The protein is E3 ubiquitin-protein ligase TRIM22 (TRIM22) of Homo sapiens (Human).